Consider the following 435-residue polypeptide: Protein GOLM2 (435 aa).

Residue methionine 1 is modified to N-acetylmethionine. At 1-14 (MVGFGANRRAGRLP) the chain is on the cytoplasmic side. Residues 15–35 (SFVLVVLLVVIVVLAFNYWSI) traverse the membrane as a helical; Signal-anchor for type II membrane protein segment. Residues 35-194 (ISSRHVLLQE…DQFLQEQKET (160 aa)) adopt a coiled-coil conformation. Residues 36–435 (SSRHVLLQEE…YGKQRFSDVL (400 aa)) lie on the Lumenal side of the membrane. 2 stretches are compositionally biased toward basic and acidic residues: residues 191–212 (QKET…DHGA) and 223–239 (DANK…PHGK). 2 disordered regions span residues 191 to 239 (QKET…PHGK) and 271 to 435 (PPVL…SDVL). Serine 232 is subject to Phosphoserine. Polar residues-rich tracts occupy residues 282–294 (QTIS…QPLS) and 302–320 (HLNQ…SNPL). A compositionally biased stretch (basic and acidic residues) spans 343-361 (ATRDRANDFHKLKQSRFFD). At serine 365 the chain carries Phosphoserine. A compositionally biased stretch (acidic residues) spans 398-417 (YNEEEDGDGGEEDVQDDEER). Residues 425 to 435 (DYGKQRFSDVL) are compositionally biased toward basic and acidic residues.

This sequence belongs to the GOLM family.

It localises to the membrane. This chain is Protein GOLM2, found in Mus musculus (Mouse).